The sequence spans 396 residues: Tyrosine--tRNA ligase (396 aa).

The 'HIGH' region signature appears at 43 to 52 (PTAPDIHLGH). The short motif at 227–231 (KMSKS) is the 'KMSKS' region element. Lys230 provides a ligand contact to ATP. Positions 335-395 (IGLATLLKEA…GKRKFARVTV (61 aa)) constitute an S4 RNA-binding domain.

This sequence belongs to the class-I aminoacyl-tRNA synthetase family. TyrS type 2 subfamily. As to quaternary structure, homodimer.

The protein localises to the cytoplasm. The enzyme catalyses tRNA(Tyr) + L-tyrosine + ATP = L-tyrosyl-tRNA(Tyr) + AMP + diphosphate + H(+). Functionally, catalyzes the attachment of tyrosine to tRNA(Tyr) in a two-step reaction: tyrosine is first activated by ATP to form Tyr-AMP and then transferred to the acceptor end of tRNA(Tyr). This chain is Tyrosine--tRNA ligase, found in Haemophilus ducreyi (strain 35000HP / ATCC 700724).